A 148-amino-acid chain; its full sequence is 3-dehydroquinate dehydratase (148 aa).

Residue Tyr22 is the Proton acceptor of the active site. The substrate site is built by Asn73, His79, and Asp86. His99 (proton donor) is an active-site residue. Residues Leu100–Ser101 and Arg110 each bind substrate.

The protein belongs to the type-II 3-dehydroquinase family. Homododecamer.

The catalysed reaction is 3-dehydroquinate = 3-dehydroshikimate + H2O. It functions in the pathway metabolic intermediate biosynthesis; chorismate biosynthesis; chorismate from D-erythrose 4-phosphate and phosphoenolpyruvate: step 3/7. Functionally, catalyzes a trans-dehydration via an enolate intermediate. This is 3-dehydroquinate dehydratase from Jannaschia sp. (strain CCS1).